Consider the following 442-residue polypeptide: Myb family transcription factor PHL13 (442 aa).

In terms of domain architecture, HTH myb-type spans 235 to 295; it reads MTSKQRMRWT…HLQKYRTARY (61 aa). The H-T-H motif DNA-binding region spans 266 to 291; that stretch reads PKAVLKLINSPGLTVYHVKSHLQKYR. The interval 329–349 is coiled coil; the sequence is TEALRLQMKVQKQLHEQLEIQ. The LHEQLE signature appears at 342 to 347; that stretch reads LHEQLE. Residues 370–380 are compositionally biased toward basic and acidic residues; sequence QQKMQENKKDS. The interval 370–442 is disordered; it reads QQKMQENKKD…TSNRKRVRED (73 aa). Residues 395–434 are compositionally biased toward polar residues; that stretch reads SPNLSQPFLHKATNSEPSITQKLQNGSSTMDQSESTSGTS.

This sequence belongs to the MYB-CC family.

It localises to the nucleus. This chain is Myb family transcription factor PHL13, found in Arabidopsis thaliana (Mouse-ear cress).